We begin with the raw amino-acid sequence, 516 residues long: ADP-ribosylation factor GTPase-activating protein 3 (516 aa).

In terms of domain architecture, Arf-GAP spans 10–126 (LTIFKRLRSV…IKSLASQATR (117 aa)). A C4-type zinc finger spans residues 25-48 (CFDCGAKNPSWASITYGVFLCIDC). A disordered region spans residues 170-199 (AEPSSLTSRPVETTLENNEGGQEQGPSVEG). Residues 173-194 (SSLTSRPVETTLENNEGGQEQG) show a composition bias toward polar residues. A Phosphoserine modification is found at S231. Residues 243–264 (NEIEKQAQAADKMKEQEDLAKA) adopt a coiled-coil conformation. 4 positions are modified to phosphoserine: S270, S274, S331, and S370. The disordered stretch occupies residues 392-414 (KTTGYSDRPTARRKPDYEPVENT). S428, S451, S453, S455, S457, and S458 each carry phosphoserine.

Its subcellular location is the cytoplasm. The protein localises to the golgi apparatus membrane. GAP activity stimulated by phosphatidylinositol 4,5-bisphosphate (PIP2). GTPase-activating protein (GAP) for ADP ribosylation factor 1 (ARF1). Hydrolysis of ARF1-bound GTP may lead to dissociation of coatomer from Golgi-derived membranes to allow fusion with target membranes. In Macaca fascicularis (Crab-eating macaque), this protein is ADP-ribosylation factor GTPase-activating protein 3.